A 466-amino-acid chain; its full sequence is Putative chitinase 2 (466 aa).

The N-terminal stretch at 1-17 (MYLTIWLVPLLAVGTWG) is a signal peptide. The region spanning 20–380 (FNRFCHYNSW…MAVIHGLNAY (361 aa)) is the GH18 domain. Cys-24 and Cys-49 are disulfide-bonded. Residue Glu-141 is the Proton donor of the active site. Residues 395–447 (YNKKILRARVSLRNYRRRNQQGKVAEMEQRIRNLEQELQQSMGNMAYERQQAQ) are a coiled coil.

This sequence belongs to the glycosyl hydrolase 18 family. Prismatic layer of shell (at protein level). Expressed primarily in the mantle with highest level in the mantle edge and lower level in the mantle pallium.

The protein localises to the secreted. The catalysed reaction is Random endo-hydrolysis of N-acetyl-beta-D-glucosaminide (1-&gt;4)-beta-linkages in chitin and chitodextrins.. The sequence is that of Putative chitinase 2 from Margaritifera margaritifera (Freshwater pearl mussel).